A 287-amino-acid polypeptide reads, in one-letter code: Pentatricopeptide repeat-containing protein At4g18975, chloroplastic (287 aa).

Residues 1 to 34 constitute a chloroplast transit peptide; that stretch reads MALCNLNPTQGIFPLQGLSKSQEFICFSLLQSPR. PPR repeat units lie at residues 165–199 and 201–235; these read TMGTYDILLLAFDMDERADEAESLWNMILHTHTRS and PRRLFARMIALYAHHDLHDKVIEVFADMEELKVSP.

The protein belongs to the PPR family. P subfamily.

It localises to the plastid. The protein localises to the chloroplast. The sequence is that of Pentatricopeptide repeat-containing protein At4g18975, chloroplastic from Arabidopsis thaliana (Mouse-ear cress).